The chain runs to 235 residues: uncharacterized protein (235 aa).

An S4 RNA-binding domain is found at 2-69 (CRLAKIISNA…KPRLWIYYKP (68 aa)). The active-site Nucleophile is Asp-102.

Belongs to the pseudouridine synthase RsuA family.

The enzyme catalyses a uridine in RNA = a pseudouridine in RNA. This is an uncharacterized protein from Rickettsia prowazekii (strain Madrid E).